We begin with the raw amino-acid sequence, 698 residues long: G1/S-specific cyclin CCN1 (698 aa).

The span at 1 to 11 shows a compositional bias: low complexity; the sequence is MTSLQQQQQQQ. Disordered stretches follow at residues 1–21, 277–326, 469–577, 599–619, and 659–698; these read MTSL…PHHI, QKKQ…DDED, DEDE…GSIL, SNSS…EKRY, and NNTN…QYHQ. Residues 277–302 show a composition bias toward polar residues; it reads QKKQKKAFSSNSSRTTTASYTHQNQS. Composition is skewed to acidic residues over residues 310–326 and 469–480; these read DEDI…DDED and DEDENVSTDDEA. Composition is skewed to polar residues over residues 493-520 and 528-567; these read DGNN…NHPQ and PSAT…SSFA. A compositionally biased stretch (polar residues) spans 659–669; the sequence is NNTNSSSPLMN. Low complexity predominate over residues 670-690; it reads QQQQYYHQQQHQQQVTQSSLY.

The protein belongs to the cyclin family.

Its function is as follows. Essential for the control of the cell cycle at the G1/S (start) transition. Interacts with the CDC2 protein kinase to form MPF. The sequence is that of G1/S-specific cyclin CCN1 (CCN1) from Candida albicans (strain WO-1) (Yeast).